Reading from the N-terminus, the 450-residue chain is Protein phosphatase 1F (450 aa).

Positions L152 to L409 constitute a PPM-type phosphatase domain. 4 residues coordinate Mn(2+): D194, G195, D356, and D400. A disordered region spans residues G420–S450. Over residues Q433–S450 the composition is skewed to polar residues. S450 is subject to Phosphoserine.

Belongs to the PP2C family. Associates with FEM1B. Requires Mg(2+) as cofactor. Mn(2+) is required as a cofactor.

It catalyses the reaction O-phospho-L-seryl-[protein] + H2O = L-seryl-[protein] + phosphate. The catalysed reaction is O-phospho-L-threonyl-[protein] + H2O = L-threonyl-[protein] + phosphate. Functionally, dephosphorylates and concomitantly deactivates CaM-kinase II activated upon autophosphorylation, and CaM-kinases IV and I activated upon phosphorylation by CaM-kinase kinase. Promotes apoptosis. This chain is Protein phosphatase 1F (Ppm1f), found in Rattus norvegicus (Rat).